The following is a 100-amino-acid chain: Large ribosomal subunit protein bL28 (100 aa).

A disordered region spans residues 1 to 21 (MSRVCDITGQGKSFGNKVSHS). The segment covering 10-19 (QGKSFGNKVS) has biased composition (polar residues).

It belongs to the bacterial ribosomal protein bL28 family.

In Ehrlichia canis (strain Jake), this protein is Large ribosomal subunit protein bL28.